Here is a 393-residue protein sequence, read N- to C-terminus: NAD(P)H-quinone oxidoreductase subunit H, chloroplastic (393 aa).

This sequence belongs to the complex I 49 kDa subunit family. In terms of assembly, NDH is composed of at least 16 different subunits, 5 of which are encoded in the nucleus.

It localises to the plastid. The protein resides in the chloroplast thylakoid membrane. It catalyses the reaction a plastoquinone + NADH + (n+1) H(+)(in) = a plastoquinol + NAD(+) + n H(+)(out). The catalysed reaction is a plastoquinone + NADPH + (n+1) H(+)(in) = a plastoquinol + NADP(+) + n H(+)(out). NDH shuttles electrons from NAD(P)H:plastoquinone, via FMN and iron-sulfur (Fe-S) centers, to quinones in the photosynthetic chain and possibly in a chloroplast respiratory chain. The immediate electron acceptor for the enzyme in this species is believed to be plastoquinone. Couples the redox reaction to proton translocation, and thus conserves the redox energy in a proton gradient. The polypeptide is NAD(P)H-quinone oxidoreductase subunit H, chloroplastic (Morus indica (Mulberry)).